The chain runs to 271 residues: Homeobox protein pal-1 (271 aa).

3 disordered regions span residues 1–25 (MSVD…TNVN), 100–135 (PPLS…ASSS), and 178–202 (GSAG…TNNV). Composition is skewed to low complexity over residues 100–117 (PPLS…YPSP) and 125–135 (STSSGIGASSS). The segment covering 189–202 (DTKSLPTGPGTNNV) has biased composition (polar residues). The homeobox DNA-binding region spans 207 to 266 (ADKYRMVYSDYQRLELEKEFHTSAFITSDRKSQLSTMLSLTERQIKIWFQNRRAKDRRDK).

It belongs to the Caudal homeobox family. In terms of assembly, interacts with tir-1 and let-756.

The protein resides in the nucleus. It localises to the chromosome. It is found in the centromere. Its subcellular location is the kinetochore. Transcriptional activator. Interacts with promoter regions for tbx-8.9, tbx-9, elt-1, hnd-1, scrt-1, and vab-7 genes. Binds the sequence ATTTATGAC. Binds to the enhancer region of the hlh-1 gene promoter during embryonic body wall muscle development. Activates the gene for mab-5 in embryo development. Necessary for vab-7 expression in C blastomeres in the posterior of embryos. Required for posterior V6 neuroectoblast cell fate specification during postembryonic neurogenesis (patterning) which generates the characteristic ray lineage during male tail development. Binds to ced-3 promoter and activated expression which is crucial for tail-spike cell death. Has a role in E cell specification in endoderm development and body wall muscle development. This Caenorhabditis briggsae protein is Homeobox protein pal-1.